Here is a 372-residue protein sequence, read N- to C-terminus: Putative isochorismate synthase MenF (372 aa).

The active-site Proton acceptor is Lys-119. Glu-175 functions as the Proton donor in the catalytic mechanism. Residues Glu-219 and Glu-356 each coordinate Mg(2+).

This sequence belongs to the isochorismate synthase family. It depends on Mg(2+) as a cofactor.

It carries out the reaction chorismate = isochorismate. The protein operates within quinol/quinone metabolism; 1,4-dihydroxy-2-naphthoate biosynthesis; 1,4-dihydroxy-2-naphthoate from chorismate: step 1/7. It participates in quinol/quinone metabolism; menaquinone biosynthesis. Catalyzes the conversion of chorismate to isochorismate. This chain is Putative isochorismate synthase MenF (menF), found in Mycobacterium tuberculosis (strain CDC 1551 / Oshkosh).